A 407-amino-acid polypeptide reads, in one-letter code: Phosphopentomutase (407 aa).

Mn(2+) contacts are provided by Asp-11, Asp-305, His-310, Asp-346, His-347, and His-358.

This sequence belongs to the phosphopentomutase family. Mn(2+) serves as cofactor.

Its subcellular location is the cytoplasm. It catalyses the reaction 2-deoxy-alpha-D-ribose 1-phosphate = 2-deoxy-D-ribose 5-phosphate. The enzyme catalyses alpha-D-ribose 1-phosphate = D-ribose 5-phosphate. It functions in the pathway carbohydrate degradation; 2-deoxy-D-ribose 1-phosphate degradation; D-glyceraldehyde 3-phosphate and acetaldehyde from 2-deoxy-alpha-D-ribose 1-phosphate: step 1/2. Functionally, isomerase that catalyzes the conversion of deoxy-ribose 1-phosphate (dRib-1-P) and ribose 1-phosphate (Rib-1-P) to deoxy-ribose 5-phosphate (dRib-5-P) and ribose 5-phosphate (Rib-5-P), respectively. In Legionella pneumophila (strain Lens), this protein is Phosphopentomutase.